A 146-amino-acid chain; its full sequence is Globin-2B (146 aa).

Residues 9-146 (QLTADVKKDL…KLVGVVQAAL (138 aa)) enclose the Globin domain. H101 serves as a coordination point for heme b.

The protein belongs to the globin family. As to quaternary structure, homodimer.

The protein is Globin-2B of Anadara trapezia (Sydney cockle).